The chain runs to 461 residues: Serine/threonine-protein kinase VHS1 (461 aa).

The Protein kinase domain occupies 12 to 337 (YLITSQIGEG…KEVSSITSFT (326 aa)). Residues 18-26 (IGEGAYGLV) and Lys-41 each bind ATP. Residue Asp-185 is the Proton acceptor of the active site. Residues 384 to 433 (LSYTSSSEEEDGIKEGIDDDNGSRSGSFGTLDTDTGLHSSFTSTSCESDN) form a disordered region. A compositionally biased stretch (acidic residues) spans 390-403 (SEEEDGIKEGIDDD). Residues 406-433 (SRSGSFGTLDTDTGLHSSFTSTSCESDN) show a composition bias toward polar residues.

The protein belongs to the protein kinase superfamily. Ser/Thr protein kinase family.

Its subcellular location is the cytoplasm. It carries out the reaction L-seryl-[protein] + ATP = O-phospho-L-seryl-[protein] + ADP + H(+). The catalysed reaction is L-threonyl-[protein] + ATP = O-phospho-L-threonyl-[protein] + ADP + H(+). Functionally, probable serine/threonine protein kinase involved in the G1-S transition. The polypeptide is Serine/threonine-protein kinase VHS1 (VHS1) (Saccharomyces cerevisiae (strain ATCC 204508 / S288c) (Baker's yeast)).